We begin with the raw amino-acid sequence, 1151 residues long: Protein kinase C-like 1 (1151 aa).

REM-1 domains are found at residues 1-67 (MSFS…KTAQ) and 106-183 (KYDC…INVD). Residues 64 to 88 (KTAQQSQGENGSEDNERCNSKEYGF) form a disordered region. The C2 domain occupies 190–309 (QPNDIMDNQQ…IRKKKAGQTN (120 aa)). S226 carries the post-translational modification Phosphoserine. The tract at residues 306 to 331 (GQTNEQQGWVNASNINGGSSLASEEG) is disordered. Phorbol-ester/DAG-type zinc fingers lie at residues 414-461 (GHHF…VTKC) and 481-531 (PHRF…PDFC). Disordered regions lie at residues 546–620 (QDTK…IIDK) and 649–669 (AQQT…SNRR). Residues 560–577 (PSAQLGSSIGTANGSDLS) show a composition bias toward polar residues. A compositionally biased stretch (basic and acidic residues) spans 605–620 (VGRDSPTKQHDPIIDK). A Phosphoserine modification is found at S761. The segment at 782–816 (LAPTSTHASRTTDQQSPQKSQTSTSAKHKKRAAKR) is disordered. Residues 792 to 806 (TTDQQSPQKSQTSTS) show a composition bias toward low complexity. Positions 807 to 816 (AKHKKRAAKR) are enriched in basic residues. The region spanning 824–1083 (FVLLKVLGKG…ADEVMEEPFF (260 aa)) is the Protein kinase domain. Residues 830 to 838 (LGKGNFGKV) and K853 contribute to the ATP site. The active-site Proton acceptor is the D949. Positions 1084 to 1151 (RNINFDDILN…FSFMPDDLDL (68 aa)) constitute an AGC-kinase C-terminal domain.

It belongs to the protein kinase superfamily. AGC Ser/Thr protein kinase family. PKC subfamily.

It carries out the reaction L-seryl-[protein] + ATP = O-phospho-L-seryl-[protein] + ADP + H(+). The catalysed reaction is L-threonyl-[protein] + ATP = O-phospho-L-threonyl-[protein] + ADP + H(+). Required for cell growth and for the G2-&gt;M transition of the cell division cycle. Mediates a protein kinase cascade; it activates BCK1 which itself activates MKK1/MKK2. This chain is Protein kinase C-like 1 (PKC1), found in Saccharomyces cerevisiae (strain ATCC 204508 / S288c) (Baker's yeast).